Reading from the N-terminus, the 193-residue chain is uncharacterized protein (193 aa).

Disordered regions lie at residues 1–21 (MPKGRRGSQSPTMSQRPAPPL), 53–96 (GAPA…PWPS), and 114–136 (SGPEAAASPLAPGPMTSRLASAS). Low complexity predominate over residues 53 to 70 (GAPAGGAPAAGGRSLPQG). The segment covering 71–95 (PSAPAPPPPPGLGPPSERPCPPPWP) has biased composition (pro residues). Low complexity predominate over residues 116 to 127 (PEAAASPLAPGP).

This is an uncharacterized protein from Bos taurus (Bovine).